A 325-amino-acid chain; its full sequence is Lipoyl synthase (325 aa).

The [4Fe-4S] cluster site is built by cysteine 71, cysteine 76, cysteine 82, cysteine 97, cysteine 101, cysteine 104, and serine 311. A Radical SAM core domain is found at 83-300; sequence FSGGTATFMI…ERQALAMGFT (218 aa).

Belongs to the radical SAM superfamily. Lipoyl synthase family. [4Fe-4S] cluster serves as cofactor.

It localises to the cytoplasm. The catalysed reaction is [[Fe-S] cluster scaffold protein carrying a second [4Fe-4S](2+) cluster] + N(6)-octanoyl-L-lysyl-[protein] + 2 oxidized [2Fe-2S]-[ferredoxin] + 2 S-adenosyl-L-methionine + 4 H(+) = [[Fe-S] cluster scaffold protein] + N(6)-[(R)-dihydrolipoyl]-L-lysyl-[protein] + 4 Fe(3+) + 2 hydrogen sulfide + 2 5'-deoxyadenosine + 2 L-methionine + 2 reduced [2Fe-2S]-[ferredoxin]. The protein operates within protein modification; protein lipoylation via endogenous pathway; protein N(6)-(lipoyl)lysine from octanoyl-[acyl-carrier-protein]: step 2/2. Its function is as follows. Catalyzes the radical-mediated insertion of two sulfur atoms into the C-6 and C-8 positions of the octanoyl moiety bound to the lipoyl domains of lipoate-dependent enzymes, thereby converting the octanoylated domains into lipoylated derivatives. In Methylobacillus flagellatus (strain ATCC 51484 / DSM 6875 / VKM B-1610 / KT), this protein is Lipoyl synthase.